The following is a 374-amino-acid chain: Ribosomal RNA large subunit methyltransferase G (374 aa).

The protein belongs to the methyltransferase superfamily. RlmG family.

The protein resides in the cytoplasm. It catalyses the reaction guanosine(1835) in 23S rRNA + S-adenosyl-L-methionine = N(2)-methylguanosine(1835) in 23S rRNA + S-adenosyl-L-homocysteine + H(+). Its function is as follows. Specifically methylates the guanine in position 1835 (m2G1835) of 23S rRNA. The protein is Ribosomal RNA large subunit methyltransferase G of Pseudomonas aeruginosa (strain UCBPP-PA14).